Reading from the N-terminus, the 548-residue chain is Chaperonin GroEL (548 aa).

ATP is bound by residues 30 to 33 (TLGP), K51, 87 to 91 (DGTTT), G415, 479 to 481 (NAA), and D495.

This sequence belongs to the chaperonin (HSP60) family. Forms a cylinder of 14 subunits composed of two heptameric rings stacked back-to-back. Interacts with the co-chaperonin GroES.

The protein localises to the cytoplasm. The enzyme catalyses ATP + H2O + a folded polypeptide = ADP + phosphate + an unfolded polypeptide.. Its function is as follows. Together with its co-chaperonin GroES, plays an essential role in assisting protein folding. The GroEL-GroES system forms a nano-cage that allows encapsulation of the non-native substrate proteins and provides a physical environment optimized to promote and accelerate protein folding. This is Chaperonin GroEL from Ectopseudomonas mendocina (strain ymp) (Pseudomonas mendocina).